A 160-amino-acid polypeptide reads, in one-letter code: MGVTKKPDLNDPVLRAKLAKGMGHNYYGEPAWPNDLLYIFPVVILGTIACNVGLAVLEPSMIGEPADPFATPLEILPEWYFFPVFQILRTVPNKLLGVLLMVSVPAGLVTVPFLENVNKFQNPFRRPVATTVFLIGTAVSLWLGIGATLPIEKSLTLGLF.

The next 3 helical transmembrane spans lie at 36–56, 95–115, and 131–151; these read LLYI…GLAV, LLGV…PFLE, and TVFL…TLPI.

It belongs to the cytochrome b family. PetD subfamily. As to quaternary structure, the 4 large subunits of the cytochrome b6-f complex are cytochrome b6, subunit IV (17 kDa polypeptide, petD), cytochrome f and the Rieske protein, while the 4 small subunits are petG, petL, petM and petN. The complex functions as a dimer.

It is found in the plastid. The protein resides in the chloroplast thylakoid membrane. In terms of biological role, component of the cytochrome b6-f complex, which mediates electron transfer between photosystem II (PSII) and photosystem I (PSI), cyclic electron flow around PSI, and state transitions. The polypeptide is Cytochrome b6-f complex subunit 4 (Lotus japonicus (Lotus corniculatus var. japonicus)).